A 278-amino-acid polypeptide reads, in one-letter code: Pantothenate synthetase (278 aa).

26–33 (MGNLHEGH) contributes to the ATP binding site. H33 acts as the Proton donor in catalysis. Position 57 (Q57) interacts with (R)-pantoate. Q57 is a beta-alanine binding site. 144–147 (GKKD) provides a ligand contact to ATP. Q150 contacts (R)-pantoate. ATP-binding positions include G173 and 181–184 (LSSR).

Belongs to the pantothenate synthetase family. Homodimer.

It is found in the cytoplasm. The enzyme catalyses (R)-pantoate + beta-alanine + ATP = (R)-pantothenate + AMP + diphosphate + H(+). It functions in the pathway cofactor biosynthesis; (R)-pantothenate biosynthesis; (R)-pantothenate from (R)-pantoate and beta-alanine: step 1/1. Functionally, catalyzes the condensation of pantoate with beta-alanine in an ATP-dependent reaction via a pantoyl-adenylate intermediate. The polypeptide is Pantothenate synthetase (Neisseria meningitidis serogroup C / serotype 2a (strain ATCC 700532 / DSM 15464 / FAM18)).